Consider the following 523-residue polypeptide: 2-isopropylmalate synthase (523 aa).

The Pyruvate carboxyltransferase domain occupies 5 to 267; it reads VIIFDTTLRD…HTRINHQEIW (263 aa). Residues Asp-14, His-202, His-204, and Asn-238 each coordinate Mn(2+). Positions 392–523 are regulatory domain; it reads RLDYFSVQSG…QNKENNKETV (132 aa).

This sequence belongs to the alpha-IPM synthase/homocitrate synthase family. LeuA type 1 subfamily. Homodimer. Mn(2+) serves as cofactor.

Its subcellular location is the cytoplasm. The catalysed reaction is 3-methyl-2-oxobutanoate + acetyl-CoA + H2O = (2S)-2-isopropylmalate + CoA + H(+). It participates in amino-acid biosynthesis; L-leucine biosynthesis; L-leucine from 3-methyl-2-oxobutanoate: step 1/4. Catalyzes the condensation of the acetyl group of acetyl-CoA with 3-methyl-2-oxobutanoate (2-ketoisovalerate) to form 3-carboxy-3-hydroxy-4-methylpentanoate (2-isopropylmalate). This Citrobacter koseri (strain ATCC BAA-895 / CDC 4225-83 / SGSC4696) protein is 2-isopropylmalate synthase.